The following is a 255-amino-acid chain: 1-(5-phosphoribosyl)-5-[(5-phosphoribosylamino)methylideneamino] imidazole-4-carboxamide isomerase (255 aa).

Aspartate 8 serves as the catalytic Proton acceptor. Aspartate 129 acts as the Proton donor in catalysis.

Belongs to the HisA/HisF family.

It localises to the cytoplasm. The catalysed reaction is 1-(5-phospho-beta-D-ribosyl)-5-[(5-phospho-beta-D-ribosylamino)methylideneamino]imidazole-4-carboxamide = 5-[(5-phospho-1-deoxy-D-ribulos-1-ylimino)methylamino]-1-(5-phospho-beta-D-ribosyl)imidazole-4-carboxamide. Its pathway is amino-acid biosynthesis; L-histidine biosynthesis; L-histidine from 5-phospho-alpha-D-ribose 1-diphosphate: step 4/9. The sequence is that of 1-(5-phosphoribosyl)-5-[(5-phosphoribosylamino)methylideneamino] imidazole-4-carboxamide isomerase from Synechococcus sp. (strain CC9605).